The sequence spans 1336 residues: MPSVSESDELIFFVNGKKVIEKNPDPEKNLLFYTRKVLNLTGTKYSCGTGGCGACTVMVSRYNPKTRKIHHYPATACLVPICWLHGAAITTVEGVGSIKKRVHPVQERLAKCHGTQCGFCSPGMVMSIYTLLRNHPEPTPDQITEALGGNLCRCTGYRPIVESGKTFSQKSTVCQMKGSGKCCMDPDEKCLESREKKMCTKLYNEDEFQPFDPSQEPIFPPELIRMAEDPNKRRLTFQGKRTTWIIPVTLNDLLELKASYPEAPLVMGNTTVGPGIKFNDEFYPVFISPLGVPELNLMDTTNNGVTIGAGYSLAQLKDTLDFLVSEQPKEKTKTFHALQKHLRTLAGPQIRNMATLGGHTASRPNFSDLNPILAAGNATINVVSREGKDRQLPLNGPFLEKLPEADLKPEEVILSIFIPYTAQWQFVSGLRLAQRQENAFAIVNAGMSVEFEEGTNTIKDLKMFFGSVAPTVVSASQTCKQLIGRQWDDQMLSDACQLVLQEIRIPPDAEGGMVEYRRTLIISLLFKFYLKVQRWLNEMDPQKFPDIPGKFVSALDDFPIETPQGIQMFQCVDPKQPQKDPVGHPIMHQSGIKHATGEAIFIDDMPPIDQELCLAVVTSTRAHAKITSLDVSEALACPGVVDVITAEDVPGENDHNGEILYAQSEVICVGQIICTVAADTYIHAKEAAKRVKIAYDDIEPTIITIEEALEHNSFLSPEKKIEQGNVDYAFKHVDQIVEGEIHVEGQEHFYMETQTILAIPQTEDKEMVLHLGTQFPTHVQEFVSAALNVPRSRIACHMKRAGGAFGGKVTKPALLGAVCAVAANKTGRPIRFILERSDDMLITAGRHPLLGKYKIGFMNNGEIRAADVEYYTNGGCTPDESELVIEFVVLKSENTYHIPNFRCRGRACKTNLPSNTAFRGFGFPQATVVVEAYIAAVASKCNLLPEEVREINMYKKTSKTAYKQTFNPEPLRRCWKECLEKSSFFARKKAAEEFNGNNYWKKRGLAVVPMKFSVAVPIAFYNQAAALVHIFLDGSVLLTHGGCELGQGLHTKMIQVASRELNVPKSYVHFSETSTTTVPNSAFTAGSMGADINGKAVQNACQILMDRLRPIIRKNPKGKWEEWIKMAFEESISLSATGYFKGYQTNMDWKKEEGDPYPYYVYGAACSEVEVDCLTGAHKLLRTDIFVDAAFSINPALDIGQVEGAFIQGMGFYTTEELKYSPKGVLYSRGPEDYKIPTITEIPEEFYVTLVHSRNPIAIYSSKGLGEAGMFLGSSVLFAIYDAVTTARKERGLSDIFPLNSPATPEVIRMACTDQFTEMIPRDDPSTFTPWSIHVS.

The region spanning 8–95 (DELIFFVNGK…GAAITTVEGV (88 aa)) is the 2Fe-2S ferredoxin-type domain. Positions 47, 52, 55, and 77 each coordinate [2Fe-2S] cluster. Gln116 contributes to the Mo-molybdopterin binding site. Cys117, Cys120, Cys152, and Cys154 together coordinate [2Fe-2S] cluster. Residue Cys154 coordinates Mo-molybdopterin. The region spanning 237–423 (FQGKRTTWII…LSIFIPYTAQ (187 aa)) is the FAD-binding PCMH-type domain. FAD-binding positions include 265–272 (LVMGNTTV), Ala346, Thr355, His359, Asp368, and Ile413. Residues 804–805 (AF), Leu1045, 1086–1089 (GSMG), Gln1201, and Leu1265 contribute to the Mo-molybdopterin site. The active-site Proton acceptor; for azaheterocycle hydroxylase activity is Glu1267.

The protein belongs to the xanthine dehydrogenase family. Homodimer. [2Fe-2S] cluster is required as a cofactor. It depends on FAD as a cofactor. Requires Mo-molybdopterin as cofactor. Highly expressed in Harderian glands and sebaceous glands with detectable levels in the epidermis and other keratinized epithelia (at protein level). Detected in testis. The expression is 3 times greater in females than in males.

Its subcellular location is the cytoplasm. The enzyme catalyses an aldehyde + O2 + H2O = a carboxylate + H2O2 + H(+). It carries out the reaction retinal + O2 + H2O = retinoate + H2O2 + H(+). It catalyses the reaction all-trans-retinal + O2 + H2O = all-trans-retinoate + H2O2 + H(+). Functionally, aldehyde oxidase able to catalyze the oxidation of retinaldehyde into retinoate. Is responsible for the major all-trans-retinaldehyde-metabolizing activity in the Harderian gland, and contributes a significant amount of the same activity in the skin. Is devoid of pyridoxal-oxidizing activity, in contrast to the other aldehyde oxidases. Acts as a negative modulator of the epidermal trophism. May be able to oxidize a wide variety of aldehydes into their corresponding carboxylates and to hydroxylate azaheterocycles. This is Aldehyde oxidase 4 (Aox4) from Mus musculus (Mouse).